The chain runs to 306 residues: Methionyl-tRNA formyltransferase (306 aa).

109–112 (SILP) lines the (6S)-5,6,7,8-tetrahydrofolate pocket.

Belongs to the Fmt family.

It catalyses the reaction L-methionyl-tRNA(fMet) + (6R)-10-formyltetrahydrofolate = N-formyl-L-methionyl-tRNA(fMet) + (6S)-5,6,7,8-tetrahydrofolate + H(+). In terms of biological role, attaches a formyl group to the free amino group of methionyl-tRNA(fMet). The formyl group appears to play a dual role in the initiator identity of N-formylmethionyl-tRNA by promoting its recognition by IF2 and preventing the misappropriation of this tRNA by the elongation apparatus. In Sphingopyxis alaskensis (strain DSM 13593 / LMG 18877 / RB2256) (Sphingomonas alaskensis), this protein is Methionyl-tRNA formyltransferase.